Reading from the N-terminus, the 409-residue chain is Protein naked cuticle homolog 2-like (409 aa).

Residue Gly-2 is the site of N-myristoyl glycine attachment. The 36-residue stretch at 109–144 (AEDNRQEWVFTLYDFDNSGKVTKEDMSSLMHTIYDV) folds into the EF-hand domain. Ca(2+) is bound by residues Asp-122, Asp-124, Ser-126, Lys-128, and Asp-133. Disordered stretches follow at residues 166 to 224 (VTPE…YCVD), 243 to 315 (TSRF…RFPG), 346 to 367 (NHTH…IRSR), and 388 to 409 (RHEH…YHQT). Composition is skewed to basic and acidic residues over residues 171 to 185 (AARR…RETS) and 193 to 224 (VRSE…YCVD). Low complexity predominate over residues 247–268 (DSSSPDADQDPPSRSSHSQSRP). The segment covering 389–409 (HEHHHHHEHHHHHHYHHYHQT) has biased composition (basic residues).

This sequence belongs to the NKD family.

Its subcellular location is the cell membrane. The protein resides in the cytoplasm. Functionally, cell autonomous antagonist of both the canonical and non-canonical Wnt signaling pathways. In Danio rerio (Zebrafish), this protein is Protein naked cuticle homolog 2-like (nkd2l).